The following is a 149-amino-acid chain: Transcriptional repressor NrdR (149 aa).

A zinc finger lies at 3–34 (CPFCFAVDTKVIDSRLVGEGSSVRRRRQCLVC). The region spanning 49 to 139 (PRVIKSNDVR…VYRSFEDIKD (91 aa)) is the ATP-cone domain.

This sequence belongs to the NrdR family. Zn(2+) is required as a cofactor.

Functionally, negatively regulates transcription of bacterial ribonucleotide reductase nrd genes and operons by binding to NrdR-boxes. The polypeptide is Transcriptional repressor NrdR (Salmonella schwarzengrund (strain CVM19633)).